Here is a 355-residue protein sequence, read N- to C-terminus: Phenylalanine--tRNA ligase alpha subunit (355 aa).

Glu-273 provides a ligand contact to Mg(2+).

The protein belongs to the class-II aminoacyl-tRNA synthetase family. Phe-tRNA synthetase alpha subunit type 1 subfamily. As to quaternary structure, tetramer of two alpha and two beta subunits. Requires Mg(2+) as cofactor.

It localises to the cytoplasm. It catalyses the reaction tRNA(Phe) + L-phenylalanine + ATP = L-phenylalanyl-tRNA(Phe) + AMP + diphosphate + H(+). This is Phenylalanine--tRNA ligase alpha subunit from Bifidobacterium adolescentis (strain ATCC 15703 / DSM 20083 / NCTC 11814 / E194a).